We begin with the raw amino-acid sequence, 197 residues long: Putative NADH dehydrogenase/NAD(P)H nitroreductase Lcho_1290 (197 aa).

This sequence belongs to the nitroreductase family. HadB/RutE subfamily. Requires FMN as cofactor.

In Leptothrix cholodnii (strain ATCC 51168 / LMG 8142 / SP-6) (Leptothrix discophora (strain SP-6)), this protein is Putative NADH dehydrogenase/NAD(P)H nitroreductase Lcho_1290.